A 335-amino-acid polypeptide reads, in one-letter code: Atypical chemokine receptor 1 (335 aa).

Topologically, residues 1-62 (MGNCLHPAEL…CNLLDDSALP (62 aa)) are extracellular. N-linked (GlcNAc...) asparagine glycosylation is found at N16, N26, and N32. 2 cysteine pairs are disulfide-bonded: C50–C275 and C128–C194. A helical transmembrane segment spans residues 63–83 (FFILVSVLGILASGTVLFMFF). Topologically, residues 84 to 94 (RPLFHWQLCPG) are cytoplasmic. A helical transmembrane segment spans residues 95-115 (WPVLAQLAVGSALFSIVVPIL). The Extracellular segment spans residues 116 to 128 (APGLGNTRSSALC). The helical transmembrane segment at 129–152 (SLGYCVWYGSAFAQALLLGCHASL) threads the bilayer. The Cytoplasmic portion of the chain corresponds to 153 to 165 (GPKLGAGQVPGLT). The helical transmembrane segment at 166–186 (LGLSVGLWGVAALLTLPITLA) threads the bilayer. Topologically, residues 187–206 (SGASGGLCTPAYSMELKALQ) are extracellular. Residues 207–227 (ATHAVACLAVFVLLPLGLFGA) form a helical membrane-spanning segment. Topologically, residues 228-243 (KGLKKALGMGPGPWMN) are cytoplasmic. Residues 244-264 (ILWAWFIFWWPHGVVLGLDFL) form a helical membrane-spanning segment. At 265–286 (VRSKLLLLSTCLAQQALDLLLN) the chain is on the extracellular side. The chain crosses the membrane as a helical span at residues 287–307 (LAEALAILHCVATPLLLALFC). Over 308-335 (HQATRTLLPSLPLPEGWSSHLDTLGSES) the chain is Cytoplasmic.

Belongs to the G-protein coupled receptor 1 family. Atypical chemokine receptor subfamily. (Microbial infection) Interacts (via N-terminal extracellular domain) with Plasmodium knowlesi Duffy receptor alpha form (DBPalpha) (via region II).

The protein resides in the early endosome. It is found in the recycling endosome. The protein localises to the membrane. Functionally, atypical chemokine receptor that controls chemokine levels and localization via high-affinity chemokine binding that is uncoupled from classic ligand-driven signal transduction cascades, resulting instead in chemokine sequestration, degradation, or transcytosis. Also known as interceptor (internalizing receptor) or chemokine-scavenging receptor or chemokine decoy receptor. Has a promiscuous chemokine-binding profile, interacting with inflammatory chemokines of both the CXC and the CC subfamilies but not with homeostatic chemokines. Acts as a receptor for chemokines including CCL2, CCL5, CCL7, CCL11, CCL13, CCL14, CCL17, CXCL5, CXCL6, IL8/CXCL8, CXCL11, GRO, RANTES, MCP-1 and TARC. May regulate chemokine bioavailability and, consequently, leukocyte recruitment through two distinct mechanisms: when expressed in endothelial cells, it sustains the abluminal to luminal transcytosis of tissue-derived chemokines and their subsequent presentation to circulating leukocytes; when expressed in erythrocytes, serves as blood reservoir of cognate chemokines but also as a chemokine sink, buffering potential surges in plasma chemokine levels. Its function is as follows. (Microbial infection) Acts as a receptor for the malaria parasite Plasmodium knowlesi. The sequence is that of Atypical chemokine receptor 1 (ACKR1) from Macaca mulatta (Rhesus macaque).